The sequence spans 441 residues: MGEMNGEGQIEVLENDIRTLRKQLQEKVQQLKTLKKHFQKNCITKLNNDEIARYSRQIILSEIGVQGQLKLKKASVLVVGAGGLGCPAALYLAGAGIGRIGVLDYDEVELTNLHRQLLHTEATVGLTKVTSVQSYLEQLNSQIEIETHHAQLTSENALALLEPYDVVVDATDNVATRYLLNDACVLLRKPLVSGSALQLEGQLTVYNYRGGPCYRCLFPTPPPPESVTNCGDGGVLGAITGVIGALQALETIKIILSNEGVLAGRLLLFDGQQSAFRNLKLRPKKPTCAVCSEAPTLTKLIDYEQFCGMRATDKDAALTLLEPCERISVRDYHDGWLAAGRDHLLVDVRNANQYEMCQLPGAPVNVPIEDILSNRRTEELLARAQQAQLPVYVVCRRGNDSQLAVRHLAPLFRERNLPAPRDLIGGLHAWTKTIDPNFPIY.

ATP-binding positions include Gly83, Asp104, 111–115, Lys128, and 172–173; these read TNLHR and DN. Cys213 and Cys216 together coordinate Zn(2+). Residue Cys230 is the Glycyl thioester intermediate; for adenylyltransferase activity of the active site. Zn(2+) is bound by residues Cys288 and Cys291. The Rhodanese domain maps to 339-439; sequence AGRDHLLVDV…WTKTIDPNFP (101 aa). Cys395 serves as the catalytic Cysteine persulfide intermediate; for sulfurtransferase activity.

In the N-terminal section; belongs to the HesA/MoeB/ThiF family. UBA4 subfamily. It depends on Zn(2+) as a cofactor.

Its subcellular location is the cytoplasm. The enzyme catalyses [molybdopterin-synthase sulfur-carrier protein]-C-terminal Gly-Gly + ATP + H(+) = [molybdopterin-synthase sulfur-carrier protein]-C-terminal Gly-Gly-AMP + diphosphate. The catalysed reaction is [molybdopterin-synthase sulfur-carrier protein]-C-terminal Gly-Gly-AMP + S-sulfanyl-L-cysteinyl-[cysteine desulfurase] + AH2 = [molybdopterin-synthase sulfur-carrier protein]-C-terminal-Gly-aminoethanethioate + L-cysteinyl-[cysteine desulfurase] + A + AMP + 2 H(+). It participates in tRNA modification; 5-methoxycarbonylmethyl-2-thiouridine-tRNA biosynthesis. It functions in the pathway cofactor biosynthesis; molybdopterin biosynthesis. Plays a central role in 2-thiolation of mcm(5)S(2)U at tRNA wobble positions of cytosolic tRNA(Lys), tRNA(Glu) and tRNA(Gln). Also essential during biosynthesis of the molybdenum cofactor. Acts by mediating the C-terminal thiocarboxylation of sulfur carriers URM1 and MOCS2A. Its N-terminus first activates URM1 and MOCS2A as acyl-adenylates (-COAMP), then the persulfide sulfur on the catalytic cysteine is transferred to URM1 and MOCS2A to form thiocarboxylation (-COSH) of their C-terminus. The reaction probably involves hydrogen sulfide that is generated from the persulfide intermediate and that acts as a nucleophile towards URM1 and MOCS2A. Subsequently, a transient disulfide bond is formed. Does not use thiosulfate as sulfur donor; NFS1 probably acting as a sulfur donor for thiocarboxylation reactions. The protein is Adenylyltransferase and sulfurtransferase MOCS3 of Anopheles gambiae (African malaria mosquito).